We begin with the raw amino-acid sequence, 344 residues long: Ferrochelatase (344 aa).

The Fe cation site is built by His214 and Glu295.

Belongs to the ferrochelatase family.

The protein localises to the cytoplasm. The enzyme catalyses heme b + 2 H(+) = protoporphyrin IX + Fe(2+). It participates in porphyrin-containing compound metabolism; protoheme biosynthesis; protoheme from protoporphyrin-IX: step 1/1. Catalyzes the ferrous insertion into protoporphyrin IX. The protein is Ferrochelatase of Allorhizobium ampelinum (strain ATCC BAA-846 / DSM 112012 / S4) (Agrobacterium vitis (strain S4)).